Reading from the N-terminus, the 185-residue chain is Large ribosomal subunit protein uL5 (185 aa).

Belongs to the universal ribosomal protein uL5 family. As to quaternary structure, part of the 50S ribosomal subunit; part of the 5S rRNA/L5/L18/L25 subcomplex. Contacts the 5S rRNA and the P site tRNA. Forms a bridge to the 30S subunit in the 70S ribosome.

This is one of the proteins that bind and probably mediate the attachment of the 5S RNA into the large ribosomal subunit, where it forms part of the central protuberance. In the 70S ribosome it contacts protein S13 of the 30S subunit (bridge B1b), connecting the 2 subunits; this bridge is implicated in subunit movement. Contacts the P site tRNA; the 5S rRNA and some of its associated proteins might help stabilize positioning of ribosome-bound tRNAs. The chain is Large ribosomal subunit protein uL5 from Bartonella quintana (strain Toulouse) (Rochalimaea quintana).